The primary structure comprises 367 residues: MANRGDLQKKTHTKKRPLHNIYGKEILSKRLEAENFPRTTLSFYRYVILENVQELRNRLYVEWEALGVLGRIYVAREGINAQLSIPSHNLNSFKENLNSRIQFKDMLLKIAVEDDHRSFLKLDLKVRNKIVADGLNDDAFDVTNVGKHLSAEEFNRCMEDKNSIVVDVRNHYESEIGHFENAILPQSDTFREELQILLELLNGKEDHKILMYCTGGIRCEKASAWLKHHGFKDVNQLHGGIISYAHEISQKGLESKFRGKNFVFDGRLQETIGNEIISVCHQCGKKSDRHINCSNPGCHILFIQCDDCSEKFEGCCTEECKTVLHLPKEKQKEIRKGKSNENRFFTKSKIRPKISELYRNRKPFETA.

The Rhodanese domain maps to 159-249 (EDKNSIVVDV…GIISYAHEIS (91 aa)). The active-site Cysteine persulfide intermediate is C213.

This sequence belongs to the TrhO family.

The catalysed reaction is uridine(34) in tRNA + AH2 + O2 = 5-hydroxyuridine(34) in tRNA + A + H2O. In terms of biological role, catalyzes oxygen-dependent 5-hydroxyuridine (ho5U) modification at position 34 in tRNAs. The protein is tRNA uridine(34) hydroxylase of Leptospira borgpetersenii serovar Hardjo-bovis (strain L550).